Here is a 355-residue protein sequence, read N- to C-terminus: Gibberellin 3-beta-dioxygenase 4 (355 aa).

Residues 203–303 (GRGAIRLNHY…RISIAYLWGG (101 aa)) form the Fe2OG dioxygenase domain. Residues histidine 227, aspartate 229, and histidine 284 each coordinate Fe cation. Arginine 294 is a catalytic residue.

The protein belongs to the iron/ascorbate-dependent oxidoreductase family. GA3OX subfamily. It depends on L-ascorbate as a cofactor. Requires Fe cation as cofactor. In terms of tissue distribution, expressed in siliques and in seeds, specifically at the rim of the embryo and the outer integument. Also expressed in flowers. Not detected in roots, stems and leaves.

It catalyses the reaction gibberellin A20 + 2-oxoglutarate + O2 = gibberellin A1 + succinate + CO2. Its pathway is plant hormone biosynthesis; gibberellin biosynthesis. In terms of biological role, converts the inactive gibberellin (GA) precursors GA9 and GA20 in the bioactives gibberellins GA4 and GA1. Involved in the production of bioactive GA for reproductive development. This Arabidopsis thaliana (Mouse-ear cress) protein is Gibberellin 3-beta-dioxygenase 4.